We begin with the raw amino-acid sequence, 412 residues long: Protein translocase subunit SecY (412 aa).

A run of 9 helical transmembrane segments spans residues 17–37, 58–78, 117–137, 143–163, 170–190, 251–271, 293–313, 350–370, and 372–392; these read IFLT…PVPG, IFSG…VPYI, ALGW…PYVF, FVVQ…WFSE, IGNG…PKLI, VMPI…GQVI, YLIF…SLII, TFLG…IENI, and SIST…GVAI.

The protein belongs to the SecY/SEC61-alpha family. Component of the plastid Sec protein translocase complex, which is composed of at least SecY and SecE.

It is found in the plastid. Its subcellular location is the chloroplast thylakoid membrane. Functionally, the central subunit of the protein translocation channel SecYE. Consists of two halves formed by TMs 1-5 and 6-10. These two domains form a lateral gate at the front which open onto the bilayer between TMs 2 and 7, and are clamped together by SecE at the back. The channel is closed by both a pore ring composed of hydrophobic SecY resides and a short helix (helix 2A) on the extracellular side of the membrane which forms a plug. This Pyrenomonas salina protein is Protein translocase subunit SecY.